Here is a 381-residue protein sequence, read N- to C-terminus: CCN family member 1 (381 aa).

The N-terminal stretch at 1 to 24 is a signal peptide; it reads MSSRIARALALVVTLLHLTRLALS. The IGFBP N-terminal domain occupies 25–94; it reads TCPAACHCPL…TALKGICRAQ (70 aa). Cystine bridges form between cysteine 26–cysteine 50, cysteine 30–cysteine 52, cysteine 32–cysteine 53, cysteine 39–cysteine 56, cysteine 64–cysteine 78, and cysteine 70–cysteine 91. The region spanning 98–164 is the VWFC domain; it reads RPCEYNSRIY…GQCCEEWVCD (67 aa). The residue at position 188 (serine 188) is a Phosphoserine; by FAM20C. One can recognise a TSP type-1 domain in the interval 228-273; sequence KCIVQTTSWSQCSKTCGTGISTRVTNDNPECRLVKETRICEVRPCG. The interval 279-315 is heparin-binding; sequence SLKKGKKCSKTKKSPEPVRFTYAGCLSVKKYRPKYCG. 5 cysteine pairs are disulfide-bonded: cysteine 286–cysteine 323, cysteine 303–cysteine 337, cysteine 314–cysteine 353, cysteine 317–cysteine 355, and cysteine 322–cysteine 359. In terms of domain architecture, CTCK spans 286 to 360; it reads CSKTKKSPEP…QSCKCNYNCP (75 aa).

Belongs to the CCN family. Interaction with integrins is heparin- and cell-type-dependent and promotes cell adhesion. In skin fibroblasts it binds ITGA6/ITGB1, in endothelial cells, binds ITGAV/ITGB3 and in platelets, ITGA2B/ITGB3. Binds, in vitro, ITGAV/ITGB5.

It localises to the secreted. Promotes cell proliferation, chemotaxis, angiogenesis and cell adhesion. Appears to play a role in wound healing by up-regulating, in skin fibroblasts, the expression of a number of genes involved in angiogenesis, inflammation and matrix remodeling including VEGA-A, VEGA-C, MMP1, MMP3, TIMP1, uPA, PAI-1 and integrins alpha-3 and alpha-5. CCN1-mediated gene regulation is dependent on heparin-binding. Down-regulates the expression of alpha-1 and alpha-2 subunits of collagen type-1. Promotes cell adhesion and adhesive signaling through integrin alpha-6/beta-1, cell migration through integrin alpha-v/beta-5 and cell proliferation through integrin alpha-v/beta-3. In Homo sapiens (Human), this protein is CCN family member 1.